Here is a 225-residue protein sequence, read N- to C-terminus: Uracil-DNA glycosylase (225 aa).

Residue Asp-65 is the Proton acceptor of the active site.

The protein belongs to the uracil-DNA glycosylase (UDG) superfamily. UNG family.

The protein localises to the cytoplasm. It carries out the reaction Hydrolyzes single-stranded DNA or mismatched double-stranded DNA and polynucleotides, releasing free uracil.. In terms of biological role, excises uracil residues from the DNA which can arise as a result of misincorporation of dUMP residues by DNA polymerase or due to deamination of cytosine. The sequence is that of Uracil-DNA glycosylase from Bacillus thuringiensis subsp. konkukian (strain 97-27).